Here is a 447-residue protein sequence, read N- to C-terminus: NADP-specific glutamate dehydrogenase (447 aa).

Substrate is bound by residues Lys92, Gln113, and Lys116. Residue Lys128 is the Proton donor of the active site. Gly167 is a substrate binding site. NADP(+) contacts are provided by Thr211 and Asn242. Ser380 lines the substrate pocket.

Belongs to the Glu/Leu/Phe/Val dehydrogenases family. In terms of assembly, homohexamer.

It carries out the reaction L-glutamate + NADP(+) + H2O = 2-oxoglutarate + NH4(+) + NADPH + H(+). Competitively inhibited by homoserine and by glutamine. Catalyzes the reversible oxidative deamination of glutamate to alpha-ketoglutarate and ammonia. The protein is NADP-specific glutamate dehydrogenase of Escherichia coli (strain K12).